Here is a 304-residue protein sequence, read N- to C-terminus: Aspartate carbamoyltransferase catalytic subunit (304 aa).

2 residues coordinate carbamoyl phosphate: Arg-57 and Thr-58. Position 85 (Lys-85) interacts with L-aspartate. Arg-107, His-134, and Gln-137 together coordinate carbamoyl phosphate. L-aspartate contacts are provided by Arg-167 and Arg-216. Positions 260 and 261 each coordinate carbamoyl phosphate.

It belongs to the aspartate/ornithine carbamoyltransferase superfamily. ATCase family. In terms of assembly, heterododecamer (2C3:3R2) of six catalytic PyrB chains organized as two trimers (C3), and six regulatory PyrI chains organized as three dimers (R2).

The catalysed reaction is carbamoyl phosphate + L-aspartate = N-carbamoyl-L-aspartate + phosphate + H(+). The protein operates within pyrimidine metabolism; UMP biosynthesis via de novo pathway; (S)-dihydroorotate from bicarbonate: step 2/3. Its function is as follows. Catalyzes the condensation of carbamoyl phosphate and aspartate to form carbamoyl aspartate and inorganic phosphate, the committed step in the de novo pyrimidine nucleotide biosynthesis pathway. The chain is Aspartate carbamoyltransferase catalytic subunit from Fusobacterium nucleatum subsp. nucleatum (strain ATCC 25586 / DSM 15643 / BCRC 10681 / CIP 101130 / JCM 8532 / KCTC 2640 / LMG 13131 / VPI 4355).